Consider the following 112-residue polypeptide: MMWHLVVQLGVFQEPARQARDQMHNFSLIMEMKITSLKILFGMRAEIILYSWKMKTLESTRTHSFIFFILFLFIFIFLTFSHNNSNSNKITSNIHTHINRHIFYFVLSYSEW.

Residues 62–82 form a helical membrane-spanning segment; sequence THSFIFFILFLFIFIFLTFSH.

It is found in the membrane. This is an uncharacterized protein from Saccharomyces cerevisiae (strain ATCC 204508 / S288c) (Baker's yeast).